We begin with the raw amino-acid sequence, 265 residues long: Ribosomal RNA large subunit methyltransferase E (265 aa).

The S-adenosyl-L-methionine site is built by glycine 83, tryptophan 85, aspartate 106, aspartate 122, and aspartate 146. Lysine 186 functions as the Proton acceptor in the catalytic mechanism. A disordered region spans residues 230-265; that stretch reads KGREAGPPSGGSERPVDVSKDLSARSDSEGPGDAEG. Over residues 243-257 the composition is skewed to basic and acidic residues; the sequence is RPVDVSKDLSARSDS.

Belongs to the class I-like SAM-binding methyltransferase superfamily. RNA methyltransferase RlmE family.

It is found in the cytoplasm. The enzyme catalyses uridine(2552) in 23S rRNA + S-adenosyl-L-methionine = 2'-O-methyluridine(2552) in 23S rRNA + S-adenosyl-L-homocysteine + H(+). In terms of biological role, specifically methylates the uridine in position 2552 of 23S rRNA at the 2'-O position of the ribose in the fully assembled 50S ribosomal subunit. The sequence is that of Ribosomal RNA large subunit methyltransferase E from Mesorhizobium japonicum (strain LMG 29417 / CECT 9101 / MAFF 303099) (Mesorhizobium loti (strain MAFF 303099)).